The chain runs to 301 residues: UDP-N-acetylenolpyruvoylglucosamine reductase (301 aa).

The FAD-binding PCMH-type domain maps to 29–195 (KIGGPADVFV…VEAIFSLTRG (167 aa)). R174 is an active-site residue. S224 functions as the Proton donor in the catalytic mechanism. E294 is a catalytic residue.

This sequence belongs to the MurB family. FAD is required as a cofactor.

It localises to the cytoplasm. The catalysed reaction is UDP-N-acetyl-alpha-D-muramate + NADP(+) = UDP-N-acetyl-3-O-(1-carboxyvinyl)-alpha-D-glucosamine + NADPH + H(+). It participates in cell wall biogenesis; peptidoglycan biosynthesis. Its function is as follows. Cell wall formation. The protein is UDP-N-acetylenolpyruvoylglucosamine reductase of Halalkalibacterium halodurans (strain ATCC BAA-125 / DSM 18197 / FERM 7344 / JCM 9153 / C-125) (Bacillus halodurans).